A 177-amino-acid polypeptide reads, in one-letter code: Large ribosomal subunit protein uL6 (177 aa).

This sequence belongs to the universal ribosomal protein uL6 family. As to quaternary structure, part of the 50S ribosomal subunit.

This protein binds to the 23S rRNA, and is important in its secondary structure. It is located near the subunit interface in the base of the L7/L12 stalk, and near the tRNA binding site of the peptidyltransferase center. This chain is Large ribosomal subunit protein uL6, found in Variovorax paradoxus (strain S110).